Reading from the N-terminus, the 1321-residue chain is Bile salt export pump (1321 aa).

The Cytoplasmic portion of the chain corresponds to 1 to 62; it reads MSDSVILRSV…FSSSKDIWLM (62 aa). Positions 62–385 constitute an ABC transmembrane type-1 1 domain; that stretch reads MLMGGVCALL…ASSCLEIFST (324 aa). A helical transmembrane segment spans residues 63–83; the sequence is LMGGVCALLHGMAQPGILIIF. At 84–147 the chain is on the extracellular side; it reads GIMTDIFIKY…MIKFSGIYAG (64 aa). 4 N-linked (GlcNAc...) asparagine glycosylation sites follow: Asn-109, Asn-116, Asn-122, and Asn-125. Residues 148 to 168 form a helical membrane-spanning segment; that stretch reads VGMTVLILGYFQIRLWVITGA. Over 169–215 the chain is Cytoplasmic; the sequence is RQIRRMRKIYFRRIMRMEIGWFDCTSVGELNSRFADDIEKINDAIAD. A helical membrane pass occupies residues 216 to 236; that stretch reads QLAHFLQRMSTAMCGLLLGFY. The Extracellular segment spans residues 237–240; the sequence is RGWK. A helical membrane pass occupies residues 241 to 261; the sequence is LTLVILAVSPLIGIGAAVIGL. Over 262-319 the chain is Cytoplasmic; the sequence is SIAKFTELELKAYAKAGSIADEVLSSIRTVAAFGGENKEVERYEKNLVFAQRWGIWKG. The helical transmembrane segment at 320 to 340 threads the bilayer; it reads MVMGFFTGYMWCLIFFCYALA. The Extracellular segment spans residues 341–353; the sequence is FWYGSTLVLDEEE. The chain crosses the membrane as a helical span at residues 354-374; sequence YTPGTLVQIFLCVILAAMNIG. The Cytoplasmic segment spans residues 375-755; that stretch reads HASSCLEIFS…KYNIPEWHYI (381 aa). The 237-residue stretch at 420 to 656 folds into the ABC transporter 1 domain; the sequence is IEFHNVTFHY…KGVYFMLVTL (237 aa). ATP is bound at residue 455–462; sequence GSSGAGKS. Thr-586 is subject to Phosphothreonine. Position 587 is a phosphoserine (Ser-587). The tract at residues 651–674 is interaction with HAX1; that stretch reads FMLVTLQSQGDNAHKETSIMGKDA. Phosphoserine is present on residues Ser-692, Ser-703, and Ser-706. Residues 755 to 1043 enclose the ABC transmembrane type-1 2 domain; it reads ILVGSLSAAI…TFSYTPSYAK (289 aa). A helical membrane pass occupies residues 756 to 776; sequence LVGSLSAAINGAVTPIYSLLF. Residues 777–794 lie on the Extracellular side of the membrane; that stretch reads SQLLGTFSLLDKEQQRSE. The helical transmembrane segment at 795 to 815 threads the bilayer; the sequence is IHSMCLFFVILGCVSIFTQFL. The Cytoplasmic portion of the chain corresponds to 816-869; it reads QGYTFAKSGELLTKRLRKFGFKAMLGQDIGWFDDLRNNPGVLTTRLATDASQVQ. A run of 2 helical transmembrane segments spans residues 870-890 and 891-911; these read GATG…IAAL and LIAF…FPFL. Over 912–979 the chain is Cytoplasmic; the sequence is ALSGAVQTKM…SYKTAVRKAN (68 aa). Residues 980–1000 form a helical membrane-spanning segment; it reads IYGLCFAFSQGIAFLANSAAY. Topologically, residues 1001-1011 are extracellular; that stretch reads RYGGYLIAYEG. The helical transmembrane segment at 1012–1032 threads the bilayer; sequence LGFSHVFRVVSSVALSATAVG. Over 1033-1321 the chain is Cytoplasmic; that stretch reads RTFSYTPSYA…KLVITGAPIS (289 aa). The region spanning 1078–1316 is the ABC transporter 2 domain; the sequence is IDFIDCKFTY…KGAYYKLVIT (239 aa). Residue 1113-1120 participates in ATP binding; that stretch reads GSSGCGKS. Residue Ser-1321 is modified to Phosphoserine.

The protein belongs to the ABC transporter superfamily. ABCB family. Multidrug resistance exporter (TC 3.A.1.201) subfamily. Interacts with HAX1. Interacts with the adapter protein complex 2 (AP-2) throught AP2A2 or AP2A1; this interaction regulates cell membrane expression of ABCB11 through its internalization in a clathrin-dependent manner and its subsequent degradation. Ubiquitinated; short-chain ubiquitination regulates cell-Surface expression of ABCB11. Post-translationally, N-glycosylated. Expressed predominantly, if not exclusively in the liver, where it was further localized to the canalicular microvilli and to subcanalicular vesicles of the hepatocytes by in situ.

The protein resides in the apical cell membrane. It is found in the recycling endosome membrane. It localises to the endosome. The protein localises to the cell membrane. It carries out the reaction cholate(in) + ATP + H2O = cholate(out) + ADP + phosphate + H(+). The enzyme catalyses taurocholate(in) + ATP + H2O = taurocholate(out) + ADP + phosphate + H(+). The catalysed reaction is glycocholate(in) + ATP + H2O = glycocholate(out) + ADP + phosphate + H(+). It catalyses the reaction glycochenodeoxycholate(in) + ATP + H2O = glycochenodeoxycholate(out) + ADP + phosphate + H(+). It carries out the reaction taurochenodeoxycholate(in) + ATP + H2O = taurochenodeoxycholate(out) + ADP + phosphate + H(+). The enzyme catalyses glycoursodeoxycholate(in) + ATP + H2O = glycoursodeoxycholate(out) + ADP + phosphate + H(+). The catalysed reaction is tauroursodeoxycholate(in) + ATP + H2O = tauroursodeoxycholate(out) + ADP + phosphate + H(+). It catalyses the reaction taurodeoxycholate(in) + ATP + H2O = taurodeoxycholate(out) + ADP + phosphate + H(+). It carries out the reaction pravastatin(in) + ATP + H2O = pravastatin(out) + ADP + phosphate + H(+). With respect to regulation, the uptake of taurocholate is inhibited by taurolithocholate sulfate with an IC(50) of 52.9 uM. Pravastatin competitively inhibits the transport of taurocholic acid. Cyclosporin A, glibenclamide, rifampicin and troglitazonestrongly competitively inhibit the transport activity of taurocholate. The canalicular transport activity of taurocholate is strongly dependent on canalicular membrane cholesterol content. The uptake of taurocholate is increased by short- and medium-chain fatty acids. Cholesterol increases transport capacity of taurocholate without affecting the affinity for the substrate. Catalyzes the transport of the major hydrophobic bile salts, such as taurine and glycine-conjugated cholic acid across the canalicular membrane of hepatocytes in an ATP-dependent manner, therefore participates in hepatic bile acid homeostasis and consequently to lipid homeostasis through regulation of biliary lipid secretion in a bile salts dependent manner. Transports taurine-conjugated bile salts more rapidly than glycine-conjugated bile salts. Also transports non-bile acid compounds, such as pravastatin and fexofenadine in an ATP-dependent manner and may be involved in their biliary excretion. The protein is Bile salt export pump of Rattus norvegicus (Rat).